A 584-amino-acid polypeptide reads, in one-letter code: Outer membrane transporter CdiB-2 (584 aa).

Residues 1 to 20 (MATRFAILPVTALITLTAQA) form the signal peptide. Positions 24–44 (PTPNDQAAAARANAEQNQQAQ) are enriched in low complexity. The interval 24–72 (PTPNDQAAAARANAEQNQQAQQRRDAQQRDATVQAPGVRSDVPRPEAYP) is disordered. Residues 98–171 (SKAQGASALP…GALKLALIPG (74 aa)) form the POTRA domain.

The protein belongs to the TPS (TC 1.B.20) family.

Its subcellular location is the cell outer membrane. Potential outer membrane protein component of a toxin-immunity protein module, which functions as a cellular contact-dependent growth inhibition (CDI) system. CDI modules allow bacteria to communicate with and inhibit the growth of closely related neighboring bacteria in a contact-dependent fashion. This protein may be required for secretion and assembly of the CdiA toxin protein. Functionally, expression of this cdiAIB locus in B.thailandensis confers protection against other bacteria carrying the locus; growth inhibition requires cellular contact. In terms of biological role, probable member of a two partner secretion pathway (TPS) in which it mediates the secretion of CdiA2. This is Outer membrane transporter CdiB-2 (cdiB2) from Burkholderia pseudomallei (strain 1026b).